Consider the following 643-residue polypeptide: Phosphatidylinositol-3,5-bisphosphate 3-phosphatase MTMR2 (643 aa).

Composition is skewed to polar residues over residues 1 to 12 (MEKSSSCESLGS) and 23 to 40 (DSLS…VHTK). The segment at 1 to 56 (MEKSSSCESLGSQPAAARPPSVDSLSSASTSHSENSVHTKSASVVSSDSISTSADN) is disordered. A phosphoserine mark is found at serine 6 and serine 9. A compositionally biased stretch (low complexity) spans 41–55 (SASVVSSDSISTSAD). Residue serine 58 is modified to Phosphoserine. The GRAM domain occupies 68–139 (NKLAEMEEPP…GVINRVEKIG (72 aa)). Residues 205–580 (GWKLYDPLLE…RHLELWVGYY (376 aa)) form the Myotubularin phosphatase domain. Residues asparagine 330, asparagine 355, and isoleucine 356 each coordinate a 1,2-diacyl-sn-glycero-3-phospho-(1D-myo-inositol-3,5-bisphosphate). The a 1,2-diacyl-sn-glycero-3-phospho-(1D-myo-inositol-3-phosphate) site is built by asparagine 330, asparagine 355, and isoleucine 356. Cysteine 417 acts as the Phosphocysteine intermediate in catalysis. The a 1,2-diacyl-sn-glycero-3-phospho-(1D-myo-inositol-3,5-bisphosphate) site is built by serine 418, aspartate 419, glycine 420, tryptophan 421, aspartate 422, arginine 423, arginine 459, and arginine 463. Serine 418, aspartate 419, glycine 420, tryptophan 421, aspartate 422, and arginine 423 together coordinate a 1,2-diacyl-sn-glycero-3-phospho-(1D-myo-inositol-3-phosphate). An a 1,2-diacyl-sn-glycero-3-phospho-(1D-myo-inositol-3-phosphate)-binding site is contributed by arginine 463. Residues 593–627 (IHNRYKELLAKRAELQKKVEELQREISNRSTSSSE) are a coiled coil. Residues 615-643 (QREISNRSTSSSERASSPAQCVTPVQTVV) form a disordered region. Positions 620–631 (NRSTSSSERASS) are enriched in low complexity. Over residues 632–643 (PAQCVTPVQTVV) the composition is skewed to polar residues.

It belongs to the protein-tyrosine phosphatase family. Non-receptor class myotubularin subfamily. Homodimer (via coiled-coil domain). Heterotetramer consisting of one MTMR2 dimer and one SBF2/MTMR13 dimer; specifically in peripheral nerves stabilizes SBF2/MTMR13 at the membranes and increases MTMR2 catalytic activity towards phosphatidylinositol 3,5-bisphosphate and to a lesser extent towards phosphatidylinositol 3-phosphate. Heterodimer with SBF1/MTMR5; acts as an adapter for the phosphatase MTMR2 to regulate MTMR2 catalytic activity and subcellular location. Heterodimer with MTMR12. Phosphorylation at Ser-58 decreases MTMR2 localization to endocytic vesicular structures.

It localises to the cytoplasm. The protein localises to the early endosome membrane. The protein resides in the perinuclear region. It is found in the cell projection. Its subcellular location is the axon. It localises to the endosome membrane. It carries out the reaction a 1,2-diacyl-sn-glycero-3-phospho-(1D-myo-inositol-3,5-bisphosphate) + H2O = a 1,2-diacyl-sn-glycero-3-phospho-(1D-myo-inositol-5-phosphate) + phosphate. The enzyme catalyses a 1,2-diacyl-sn-glycero-3-phospho-(1D-myo-inositol-3-phosphate) + H2O = a 1,2-diacyl-sn-glycero-3-phospho-(1D-myo-inositol) + phosphate. It catalyses the reaction 1,2-dioctanoyl-sn-glycero-3-phospho-(1-D-myo-inositol-3-phosphate) + H2O = 1,2-dioctanoyl-sn-glycero-3-phospho-(1D-myo-inositol) + phosphate. The catalysed reaction is 1,2-dioctanoyl-sn-glycero-3-phospho-(1D-myo-inositol-3,5-bisphosphate) + H2O = 1,2-dioctanoyl-sn-glycero-3-phospho-(1D-myo-inositol-5-phosphate) + phosphate. Its function is as follows. Lipid phosphatase that specifically dephosphorylates the D-3 position of phosphatidylinositol 3-phosphate and phosphatidylinositol 3,5-bisphosphate, generating phosphatidylinositol and phosphatidylinositol 5-phosphate. Regulates the level of these phosphoinositides critical for various biological processes including autophagy initiation and autophagosome maturation. In Homo sapiens (Human), this protein is Phosphatidylinositol-3,5-bisphosphate 3-phosphatase MTMR2.